Consider the following 354-residue polypeptide: Threonine synthase (354 aa).

Position 61 is an N6-(pyridoxal phosphate)lysine (lysine 61). Pyridoxal 5'-phosphate is bound by residues asparagine 87, 187-191 (GNAGN), and threonine 316.

The protein belongs to the threonine synthase family. The cofactor is pyridoxal 5'-phosphate.

It carries out the reaction O-phospho-L-homoserine + H2O = L-threonine + phosphate. It participates in amino-acid biosynthesis; L-threonine biosynthesis; L-threonine from L-aspartate: step 5/5. Functionally, catalyzes the gamma-elimination of phosphate from L-phosphohomoserine and the beta-addition of water to produce L-threonine. The polypeptide is Threonine synthase (thrC) (Halalkalibacterium halodurans (strain ATCC BAA-125 / DSM 18197 / FERM 7344 / JCM 9153 / C-125) (Bacillus halodurans)).